The sequence spans 204 residues: Large ribosomal subunit protein eL15 (204 aa).

It belongs to the eukaryotic ribosomal protein eL15 family. In terms of assembly, component of the large ribosomal subunit.

The protein resides in the cytoplasm. Its function is as follows. Component of the large ribosomal subunit. The ribosome is a large ribonucleoprotein complex responsible for the synthesis of proteins in the cell. This Anguilla japonica (Japanese eel) protein is Large ribosomal subunit protein eL15 (rpl15).